Reading from the N-terminus, the 497-residue chain is Cytochrome P450 2D6 (497 aa).

Asp301 serves as a coordination point for substrate. A heme-binding site is contributed by Cys443.

It belongs to the cytochrome P450 family. Heme serves as cofactor.

The protein localises to the endoplasmic reticulum membrane. The protein resides in the microsome membrane. It carries out the reaction (5Z,8Z,11Z,14Z)-eicosatetraenoate + reduced [NADPH--hemoprotein reductase] + O2 = (8R,9S)-epoxy-(5Z,11Z,14Z)-eicosatrienoate + oxidized [NADPH--hemoprotein reductase] + H2O + H(+). The catalysed reaction is (5Z,8Z,11Z,14Z)-eicosatetraenoate + reduced [NADPH--hemoprotein reductase] + O2 = (11R,12S)-epoxy-(5Z,8Z,14Z)-eicosatrienoate + oxidized [NADPH--hemoprotein reductase] + H2O + H(+). It catalyses the reaction (5Z,8Z,11Z,14Z)-eicosatetraenoate + reduced [NADPH--hemoprotein reductase] + O2 = (14S,15R)-epoxy-(5Z,8Z,11Z)-eicosatrienoate + oxidized [NADPH--hemoprotein reductase] + H2O + H(+). The enzyme catalyses N-(5Z,8Z,11Z,14Z-eicosatetraenoyl)-ethanolamine + reduced [NADPH--hemoprotein reductase] + O2 = N-(8,9-epoxy-5Z,11Z,14Z-eicosatrienoyl)-ethanolamine + oxidized [NADPH--hemoprotein reductase] + H2O + H(+). It carries out the reaction N-(5Z,8Z,11Z,14Z-eicosatetraenoyl)-ethanolamine + reduced [NADPH--hemoprotein reductase] + O2 = N-(11,12-epoxy-5Z,8Z,14Z-eicosatrienoyl)-ethanolamine + oxidized [NADPH--hemoprotein reductase] + H2O + H(+). The catalysed reaction is N-(5Z,8Z,11Z,14Z-eicosatetraenoyl)-ethanolamine + reduced [NADPH--hemoprotein reductase] + O2 = N-(14,15-epoxy-5Z,8Z,11Z-eicosatrienoyl)-ethanolamine + oxidized [NADPH--hemoprotein reductase] + H2O + H(+). It catalyses the reaction N-(5Z,8Z,11Z,14Z-eicosatetraenoyl)-ethanolamine + reduced [NADPH--hemoprotein reductase] + O2 = N-(20-hydroxy-5Z,8Z,11Z,14Z-eicosatetraenoyl)-ethanolamine + oxidized [NADPH--hemoprotein reductase] + H2O + H(+). The enzyme catalyses (5Z,8Z,11Z,14Z,17Z)-eicosapentaenoate + reduced [NADPH--hemoprotein reductase] + O2 = (17S,18R)-epoxy-(5Z,8Z,11Z,14Z)-eicosatetraenoate + oxidized [NADPH--hemoprotein reductase] + H2O + H(+). It carries out the reaction (4Z,7Z,10Z,13Z,16Z,19Z)-docosahexaenoate + reduced [NADPH--hemoprotein reductase] + O2 = (19R,20S)-epoxy-(4Z,7Z,10Z,13Z,16Z)-docosapentaenoate + oxidized [NADPH--hemoprotein reductase] + H2O + H(+). The catalysed reaction is (4Z,7Z,10Z,13Z,16Z,19Z)-docosahexaenoate + reduced [NADPH--hemoprotein reductase] + O2 = (19S,20R)-epoxy-(4Z,7Z,10Z,13Z,16Z)-docosapentaenoate + oxidized [NADPH--hemoprotein reductase] + H2O + H(+). It catalyses the reaction cholesterol + reduced [NADPH--hemoprotein reductase] + O2 = 25-hydroxycholesterol + oxidized [NADPH--hemoprotein reductase] + H2O + H(+). The enzyme catalyses all-trans-retinol + reduced [NADPH--hemoprotein reductase] + O2 = all-trans-retinal + oxidized [NADPH--hemoprotein reductase] + 2 H2O + H(+). Its pathway is cofactor metabolism; retinol metabolism. It participates in lipid metabolism; fatty acid metabolism. It functions in the pathway steroid metabolism; cholesterol metabolism. A cytochrome P450 monooxygenase involved in the metabolism of fatty acids, steroids and retinoids. Mechanistically, uses molecular oxygen inserting one oxygen atom into a substrate, and reducing the second into a water molecule, with two electrons provided by NADPH via cytochrome P450 reductase (NADPH--hemoprotein reductase). Catalyzes the epoxidation of double bonds of polyunsaturated fatty acids (PUFA). Metabolizes endocannabinoid arachidonoylethanolamide (anandamide) to 20-hydroxyeicosatetraenoic acid ethanolamide (20-HETE-EA) and 8,9-, 11,12-, and 14,15-epoxyeicosatrienoic acid ethanolamides (EpETrE-EAs), potentially modulating endocannabinoid system signaling. Catalyzes the hydroxylation of carbon-hydrogen bonds. Metabolizes cholesterol toward 25-hydroxycholesterol, a physiological regulator of cellular cholesterol homeostasis. Catalyzes the oxidative transformations of all-trans retinol to all-trans retinal, a precursor for the active form all-trans-retinoic acid. Also involved in the oxidative metabolism of drugs such as antiarrhythmics, adrenoceptor antagonists, and tricyclic antidepressants. In Pan paniscus (Pygmy chimpanzee), this protein is Cytochrome P450 2D6 (CYP2D6).